Reading from the N-terminus, the 294-residue chain is Cytidine deaminase (294 aa).

2 CMP/dCMP-type deaminase domains span residues 48–168 (DDDA…FGPT) and 187–294 (AETD…RVTF). 89–91 (NME) serves as a coordination point for substrate. Histidine 102 provides a ligand contact to Zn(2+). Glutamate 104 serves as the catalytic Proton donor. Zn(2+)-binding residues include cysteine 129 and cysteine 132.

Belongs to the cytidine and deoxycytidylate deaminase family. In terms of assembly, homodimer. The cofactor is Zn(2+).

It carries out the reaction cytidine + H2O + H(+) = uridine + NH4(+). The enzyme catalyses 2'-deoxycytidine + H2O + H(+) = 2'-deoxyuridine + NH4(+). Its function is as follows. This enzyme scavenges exogenous and endogenous cytidine and 2'-deoxycytidine for UMP synthesis. The chain is Cytidine deaminase from Yersinia pseudotuberculosis serotype O:1b (strain IP 31758).